The primary structure comprises 546 residues: MDLLSLITGKKFEKHYSKVGSRFSDESLNGLEKQLSNGADAAIDTTADDRGSVVSLGASLPLSQGRPAKSKNILNDTLLAEDQYLVTWDGPDDPLNPRNWSHSYKWWIVIQVSVITIVVTFASSVYSSGIIDIASELHSSIPVSTLGSCTFLVGFGVGSLPFAPLSDIYGRFIIYFVTLLIFTIFQVGGGCAHNVWTLAIVRFFQGVFGSTPLANAGGTISDLFTPVQRTYVLPGFCTFPYLGPIIGPIIGDFITQSYLEWRWTFWINMIWAAAVIVFVFIFFPETHEDTILDYKAKYLRKTTGNTAYYTIHERERDPKNAMIQAATQAVSLIFTEPIVVCFTLYLTVVYIINYINFEGYPIVFAKYGFNKGEQGLSFIGVGVGIVCAGLCTPFIYWHYLKVNKKRNGVICPEDRLYPLFIGCFLLPISMFWFAWTCYPHHIHWIVPIIASAFFGFSLLIVFFVSYNYIIDSYQHMAPSALAAATLVRYSASGGISMVARPMYLNLGDHWATSVLGFISVAMVPIPFIFYRFGKSIRAWSKNAYKL.

The next 10 membrane-spanning stretches (helical) occupy residues 106-126 (WWIV…SSVY), 145-165 (TLGS…FAPL), 172-192 (FIIY…GGCA), 231-251 (YVLP…PIIG), 263-283 (WTFW…FIFF), 332-352 (LIFT…VYII), 375-395 (GLSF…TPFI), 416-436 (LYPL…FAWT), 444-464 (WIVP…VFFV), and 510-530 (WATS…FIFY).

The protein belongs to the major facilitator superfamily. CAR1 family.

It is found in the endoplasmic reticulum membrane. This is an uncharacterized protein from Schizosaccharomyces pombe (strain 972 / ATCC 24843) (Fission yeast).